We begin with the raw amino-acid sequence, 381 residues long: MPFSSTHNKHKLKFSAEEEFPDLSKHNNHMAKVLTPELYKRLRDKETPSGFTLDDVIQTGVDNPGHPFIMTVGCVAGDEESYEVFKDLFDPVIQDRHGGYKPTDKHRTDLNHENLKGGDDLDPKYVLSSRVRTGRSIKGYSLPPHCSRGERRAVEKLSVEALNSLEGEFKGRYYPLKAMTEQEQQQLIDDHFLFDKPVSPLLLASGMARDWPDARGIWHNDNKTFLVWVNEEDHLRVISMEKGGNMKEVFRRFCVGLKKIEEIFKKAGHPFMWTEHLGYILTCPSNLGTGLRGGVHVKLPKLSQHPKFEEILHRLRLQKRGTGGVDTAAVGAVFDISNADRLGFSEVEQVQMVVDGVKLMVEMEKKLEQNQPIDDMIPAQK.

One can recognise a Phosphagen kinase N-terminal domain in the interval 11–98; it reads KLKFSAEEEF…FDPVIQDRHG (88 aa). The interval 99-118 is disordered; the sequence is GYKPTDKHRTDLNHENLKGG. Residues 125 to 367 form the Phosphagen kinase C-terminal domain; that stretch reads YVLSSRVRTG…KLMVEMEKKL (243 aa). Residues 128–132, H191, R236, R292, 320–325, and D335 each bind ATP; these read SSRVR and RGTGGV.

This sequence belongs to the ATP:guanido phosphotransferase family. Dimer of identical or non-identical chains, which can be either B (brain type) or M (muscle type). With MM being the major form in skeletal muscle and myocardium, MB existing in myocardium, and BB existing in many tissues, especially brain. As to expression, predominantly found in skeletal muscle, but not in the heart.

It localises to the cytoplasm. It catalyses the reaction creatine + ATP = N-phosphocreatine + ADP + H(+). Its function is as follows. Reversibly catalyzes the transfer of phosphate between ATP and various phosphogens (e.g. creatine phosphate). Creatine kinase isoenzymes play a central role in energy transduction in tissues with large, fluctuating energy demands, such as skeletal muscle, heart, brain and spermatozoa. The sequence is that of Creatine kinase M-type from Gallus gallus (Chicken).